Here is a 461-residue protein sequence, read N- to C-terminus: Probable tubulin polyglutamylase TTLL9 (461 aa).

The span at 1 to 10 (MSRQKSQTSK) shows a compositional bias: polar residues. The segment at 1-20 (MSRQKSQTSKGHGASKGKER) is disordered. Positions 22-402 (QRTLIRFKTT…EARLTGKEKR (381 aa)) constitute a TTL domain. ATP is bound by residues K149 and 155 to 156 (QG). Residue Q155 participates in a protein binding. Over residues 186 to 197 (QATRANVNPSGS) the composition is skewed to polar residues. The disordered stretch occupies residues 186–208 (QATRANVNPSGSHDTRSSDDQKD). Residues 198-208 (HDTRSSDDQKD) are compositionally biased toward basic and acidic residues. ATP-binding positions include 218 to 221 (QRYV) and 231 to 233 (KFD). R257 is an L-glutamate binding site. Residue 276–277 (TN) coordinates ATP. Residue K294 participates in L-glutamate binding. Mg(2+) is bound by residues D348, E361, and N363. Residue K379 coordinates L-glutamate.

Belongs to the tubulin--tyrosine ligase family. Requires Mg(2+) as cofactor.

It is found in the cytoplasm. Its subcellular location is the cytoskeleton. The protein resides in the cilium basal body. It localises to the flagellum axoneme. The catalysed reaction is (L-glutamyl)(n)-gamma-L-glutamyl-L-glutamyl-[protein] + L-glutamate + ATP = (L-glutamyl)(n+1)-gamma-L-glutamyl-L-glutamyl-[protein] + ADP + phosphate + H(+). Functionally, probable tubulin polyglutamylase that generates side chains of glutamate on the gamma-carboxyl group of specific glutamate residues within the C-terminal tail of target proteins. Similar to TTLL1, may acquire enzymatic activity only in complex with other proteins as it is most likely lacking domains important for autonomous activity. Mediates tubulin polyglutamylation which induces establishment of microtubule heterogeneity in sperm flagella, thereby playing a role in normal motile flagella axoneme structure and sperm flagella beating pattern. The chain is Probable tubulin polyglutamylase TTLL9 (Ttll9) from Rattus norvegicus (Rat).